We begin with the raw amino-acid sequence, 122 residues long: LOB domain-containing protein 5 (122 aa).

The LOB domain maps to 8–109; sequence RPCSVCITKN…AYLRELQEKI (102 aa).

This sequence belongs to the LOB domain-containing protein family.

The chain is LOB domain-containing protein 5 (LBD5) from Arabidopsis thaliana (Mouse-ear cress).